The primary structure comprises 205 residues: Small ribosomal subunit protein uS5 (205 aa).

The S5 DRBM domain maps to 49–112 (LEDEVLDIAM…TKAKMNLVKV (64 aa)).

The protein belongs to the universal ribosomal protein uS5 family. In terms of assembly, part of the 30S ribosomal subunit. Contacts protein S4.

With S4 and S12 plays an important role in translational accuracy. In Methanoregula boonei (strain DSM 21154 / JCM 14090 / 6A8), this protein is Small ribosomal subunit protein uS5.